Here is a 267-residue protein sequence, read N- to C-terminus: Diphthine--ammonia ligase (267 aa).

Tyr97 bears the Phosphotyrosine mark.

This sequence belongs to the Diphthine--ammonia ligase family.

It carries out the reaction diphthine-[translation elongation factor 2] + NH4(+) + ATP = diphthamide-[translation elongation factor 2] + AMP + diphosphate + H(+). It participates in protein modification; peptidyl-diphthamide biosynthesis. Amidase that catalyzes the last step of diphthamide biosynthesis using ammonium and ATP. Diphthamide biosynthesis consists in the conversion of an L-histidine residue in the translation elongation factor 2 (EEF2) to diphthamide. This Mus musculus (Mouse) protein is Diphthine--ammonia ligase (Dph6).